The chain runs to 193 residues: MNFLAHLHLAHLADSSLSGNLLADFVRGNPATHYPPDVVEGIYMHRRIDVITDNLPEVREAREWFRHETRRVAPITLDVMWDHFLSRHWTQISPDFPLQAFVGYAHAQVATILPDSPPRFVNLNDYLWSEKWLERYRDMDFIQNVLNGMANRRPRLDALRDSWYDLDAHYDALEERFWHFYPRMMAQAARKAL.

This sequence belongs to the AcpH family.

The enzyme catalyses holo-[ACP] + H2O = apo-[ACP] + (R)-4'-phosphopantetheine + H(+). Functionally, converts holo-ACP to apo-ACP by hydrolytic cleavage of the phosphopantetheine prosthetic group from ACP. The chain is Acyl carrier protein phosphodiesterase from Salmonella newport (strain SL254).